Reading from the N-terminus, the 419-residue chain is Keratin, type I cytoskeletal 47 kDa (419 aa).

Positions 1–81 are head; it reads MSFRSSSSYS…SSSFSNFGGN (81 aa). A coil 1A region spans residues 82 to 117; that stretch reads DKQTMQNLNDRLASYLEKVRALEAANADLELKIREW. One can recognise an IF rod domain in the interval 82–397; the sequence is DKQTMQNLND…RLLEGEFGSL (316 aa). Residues 118–139 are linker 1; the sequence is YEKQKGSGIGAGSKDFSKYFEI. Residues 140-231 form a coil 1B region; the sequence is ISDLRNKILS…KNHEEEMSIA (92 aa). Residues 232-254 are linker 12; that stretch reads KSSSAGQVNVEMDAAPGIDLNKI. The interval 255 to 393 is coil 2; that stretch reads LSDMRADYET…ETYRRLLEGE (139 aa). Residues 394–419 are tail; that stretch reads FGSLKSSIVQATEVSTSQSSSSSKKD.

Belongs to the intermediate filament family. In terms of assembly, heterotetramer of two type I and two type II keratins.

The sequence is that of Keratin, type I cytoskeletal 47 kDa (xk81b2) from Xenopus laevis (African clawed frog).